Reading from the N-terminus, the 476-residue chain is Adenosylhomocysteinase (476 aa).

Substrate is bound by residues Thr-67, Asp-142, and Glu-202. Position 203-205 (203-205) interacts with NAD(+); that stretch reads TTT. 2 residues coordinate substrate: Lys-232 and Asp-236. Residues Asn-237, 266 to 271, Glu-289, Asn-324, 345 to 347, and Asn-390 each bind NAD(+); these read GYGDVG and IGH.

It belongs to the adenosylhomocysteinase family. NAD(+) serves as cofactor.

It is found in the cytoplasm. The enzyme catalyses S-adenosyl-L-homocysteine + H2O = L-homocysteine + adenosine. It functions in the pathway amino-acid biosynthesis; L-homocysteine biosynthesis; L-homocysteine from S-adenosyl-L-homocysteine: step 1/1. May play a key role in the regulation of the intracellular concentration of adenosylhomocysteine. The protein is Adenosylhomocysteinase of Prochlorococcus marinus (strain MIT 9211).